Reading from the N-terminus, the 91-residue chain is Small ribosomal subunit protein uS19 (91 aa).

It belongs to the universal ribosomal protein uS19 family.

Functionally, protein S19 forms a complex with S13 that binds strongly to the 16S ribosomal RNA. The sequence is that of Small ribosomal subunit protein uS19 from Delftia acidovorans (strain DSM 14801 / SPH-1).